Consider the following 411-residue polypeptide: NADH-quinone oxidoreductase subunit D (411 aa).

This sequence belongs to the complex I 49 kDa subunit family. NDH-1 is composed of 14 different subunits. Subunits NuoB, C, D, E, F, and G constitute the peripheral sector of the complex.

The protein localises to the cell inner membrane. It catalyses the reaction a quinone + NADH + 5 H(+)(in) = a quinol + NAD(+) + 4 H(+)(out). In terms of biological role, NDH-1 shuttles electrons from NADH, via FMN and iron-sulfur (Fe-S) centers, to quinones in the respiratory chain. The immediate electron acceptor for the enzyme in this species is believed to be ubiquinone. Couples the redox reaction to proton translocation (for every two electrons transferred, four hydrogen ions are translocated across the cytoplasmic membrane), and thus conserves the redox energy in a proton gradient. In Phenylobacterium zucineum (strain HLK1), this protein is NADH-quinone oxidoreductase subunit D.